A 525-amino-acid polypeptide reads, in one-letter code: Peptide chain release factor 3 (525 aa).

In terms of domain architecture, tr-type G spans 8 to 276 (AMRRTFAIIS…AFVKEAPPPQ (269 aa)). Residues 17 to 24 (SHPDAGKT), 85 to 89 (DTPGH), and 139 to 142 (NKMD) contribute to the GTP site.

It belongs to the TRAFAC class translation factor GTPase superfamily. Classic translation factor GTPase family. PrfC subfamily.

It is found in the cytoplasm. Its function is as follows. Increases the formation of ribosomal termination complexes and stimulates activities of RF-1 and RF-2. It binds guanine nucleotides and has strong preference for UGA stop codons. It may interact directly with the ribosome. The stimulation of RF-1 and RF-2 is significantly reduced by GTP and GDP, but not by GMP. The sequence is that of Peptide chain release factor 3 from Coxiella burnetii (strain CbuK_Q154) (Coxiella burnetii (strain Q154)).